The primary structure comprises 912 residues: Isoleucine--tRNA ligase (912 aa).

The short motif at 57 to 67 is the 'HIGH' region element; sequence PYANGDIHLGT. E549 contacts L-isoleucyl-5'-AMP. A 'KMSKS' region motif is present at residues 590–594; sequence KMSKS. K593 contacts ATP. The Zn(2+) site is built by C880, C883, C900, and C903.

The protein belongs to the class-I aminoacyl-tRNA synthetase family. IleS type 1 subfamily. As to quaternary structure, monomer. Zn(2+) serves as cofactor.

Its subcellular location is the cytoplasm. The enzyme catalyses tRNA(Ile) + L-isoleucine + ATP = L-isoleucyl-tRNA(Ile) + AMP + diphosphate. In terms of biological role, catalyzes the attachment of isoleucine to tRNA(Ile). As IleRS can inadvertently accommodate and process structurally similar amino acids such as valine, to avoid such errors it has two additional distinct tRNA(Ile)-dependent editing activities. One activity is designated as 'pretransfer' editing and involves the hydrolysis of activated Val-AMP. The other activity is designated 'posttransfer' editing and involves deacylation of mischarged Val-tRNA(Ile). In Fervidobacterium pennivorans (strain DSM 9078 / Ven5), this protein is Isoleucine--tRNA ligase.